The chain runs to 427 residues: Flotillin-1 (427 aa).

3 positions are modified to phosphoserine: Ser-19, Ser-163, and Ser-385.

This sequence belongs to the band 7/mec-2 family. Flotillin subfamily. In terms of assembly, heterooligomeric complex of flotillin-1 and flotillin-2 and caveolin-1 and caveolin-2. Interacts with ECPAS.

It is found in the cell membrane. Its subcellular location is the endosome. It localises to the membrane. The protein localises to the caveola. The protein resides in the melanosome. It is found in the membrane raft. Functionally, may act as a scaffolding protein within caveolar membranes, functionally participating in formation of caveolae or caveolae-like vesicles. This Bos taurus (Bovine) protein is Flotillin-1 (FLOT1).